The following is a 142-amino-acid chain: Transcriptional regulator MraZ (142 aa).

SpoVT-AbrB domains follow at residues Ala5–Val51 and Ala77–Lys120.

Belongs to the MraZ family. In terms of assembly, forms oligomers.

It localises to the cytoplasm. It is found in the nucleoid. The protein is Transcriptional regulator MraZ of Janthinobacterium sp. (strain Marseille) (Minibacterium massiliensis).